The chain runs to 218 residues: Thiamine-phosphate synthase (218 aa).

4-amino-2-methyl-5-(diphosphooxymethyl)pyrimidine is bound by residues 43–47 and Asn78; that span reads QFRDK. Mg(2+)-binding residues include Asp79 and Asp98. Ser117 contributes to the 4-amino-2-methyl-5-(diphosphooxymethyl)pyrimidine binding site. 143 to 145 serves as a coordination point for 2-[(2R,5Z)-2-carboxy-4-methylthiazol-5(2H)-ylidene]ethyl phosphate; the sequence is TNS. Position 146 (Lys146) interacts with 4-amino-2-methyl-5-(diphosphooxymethyl)pyrimidine. 2-[(2R,5Z)-2-carboxy-4-methylthiazol-5(2H)-ylidene]ethyl phosphate contacts are provided by residues Gly174 and 194-195; that span reads IS.

The protein belongs to the thiamine-phosphate synthase family. It depends on Mg(2+) as a cofactor.

The catalysed reaction is 2-[(2R,5Z)-2-carboxy-4-methylthiazol-5(2H)-ylidene]ethyl phosphate + 4-amino-2-methyl-5-(diphosphooxymethyl)pyrimidine + 2 H(+) = thiamine phosphate + CO2 + diphosphate. It catalyses the reaction 2-(2-carboxy-4-methylthiazol-5-yl)ethyl phosphate + 4-amino-2-methyl-5-(diphosphooxymethyl)pyrimidine + 2 H(+) = thiamine phosphate + CO2 + diphosphate. The enzyme catalyses 4-methyl-5-(2-phosphooxyethyl)-thiazole + 4-amino-2-methyl-5-(diphosphooxymethyl)pyrimidine + H(+) = thiamine phosphate + diphosphate. It functions in the pathway cofactor biosynthesis; thiamine diphosphate biosynthesis; thiamine phosphate from 4-amino-2-methyl-5-diphosphomethylpyrimidine and 4-methyl-5-(2-phosphoethyl)-thiazole: step 1/1. Its function is as follows. Condenses 4-methyl-5-(beta-hydroxyethyl)thiazole monophosphate (THZ-P) and 2-methyl-4-amino-5-hydroxymethyl pyrimidine pyrophosphate (HMP-PP) to form thiamine monophosphate (TMP). This chain is Thiamine-phosphate synthase, found in Lactococcus lactis subsp. cremoris (strain SK11).